A 133-amino-acid polypeptide reads, in one-letter code: MIIGLGSDLCNIERIQASLDRFGERFENRVFTDVERAKAARRPFTRAGTYAKRFAAKEAFSKAVGTGFKRGVFMKDIGVVNAPSGAPTLALTGGAAERLAAMIPPGHTAHIHLTLTDDHPWAQAFVIIEAIKD.

Aspartate 8 and glutamate 58 together coordinate Mg(2+).

The protein belongs to the P-Pant transferase superfamily. AcpS family. It depends on Mg(2+) as a cofactor.

It is found in the cytoplasm. The enzyme catalyses apo-[ACP] + CoA = holo-[ACP] + adenosine 3',5'-bisphosphate + H(+). Transfers the 4'-phosphopantetheine moiety from coenzyme A to a Ser of acyl-carrier-protein. This is Holo-[acyl-carrier-protein] synthase from Sphingopyxis alaskensis (strain DSM 13593 / LMG 18877 / RB2256) (Sphingomonas alaskensis).